The sequence spans 221 residues: UPF0758 protein YicR (221 aa).

The region spanning 99 to 221 (ALLSPEMTRE…YVSFAERGWI (123 aa)) is the MPN domain. Residues histidine 170, histidine 172, and aspartate 183 each coordinate Zn(2+). Positions 170-183 (HNHPSGCAEPSKAD) match the JAMM motif motif.

Belongs to the UPF0758 family. YicR subfamily.

The polypeptide is UPF0758 protein YicR (Salmonella paratyphi A (strain ATCC 9150 / SARB42)).